Reading from the N-terminus, the 273-residue chain is MSEDVKKYFTTGEFSKLCRVKKQTLFHYDEIGLFSPEIKKENGYRYYSYHQFETFQVISLFKELGVPLKEIKCLIKGKTPDKILHVLKEKSIEIDKKINELKQLQTILQTKVTLTEQALETDFSSISFEYLNEETFMLSRKTLNLPERKYVAAISELIHEVQQYELDEGYPIGGIFAREQILEKDFYNYSYFYIKVKDGAENINYHVRPKGLYAVGYEIGGNTEEAYRRIIEFIERNGMQIGENAYEEYMLDEMVVDGYENTYAKILLQVKEV.

One can recognise an HTH merR-type domain in the interval 8-77 (YFTTGEFSKL…LKEIKCLIKG (70 aa)). Positions 11–30 (TGEFSKLCRVKKQTLFHYDE) form a DNA-binding region, H-T-H motif.

In terms of biological role, activates transcription of the blt gene in response to structurally dissimilar drugs. The sequence is that of Multidrug-efflux transporter 2 regulator (bltR) from Bacillus subtilis (strain 168).